The following is a 61-amino-acid chain: Small ribosomal subunit protein uS14 (61 aa).

Cysteine 24, cysteine 27, cysteine 40, and cysteine 43 together coordinate Zn(2+).

Belongs to the universal ribosomal protein uS14 family. Zinc-binding uS14 subfamily. As to quaternary structure, part of the 30S ribosomal subunit. Contacts proteins S3 and S10. Requires Zn(2+) as cofactor.

Binds 16S rRNA, required for the assembly of 30S particles and may also be responsible for determining the conformation of the 16S rRNA at the A site. The chain is Small ribosomal subunit protein uS14 from Thermotoga neapolitana (strain ATCC 49049 / DSM 4359 / NBRC 107923 / NS-E).